Here is a 231-residue protein sequence, read N- to C-terminus: Protein usf (231 aa).

This Aquifex pyrophilus protein is Protein usf (usf).